Here is a 125-residue protein sequence, read N- to C-terminus: Cu-Zn superoxide dismutase-like protein (125 aa).

Cys52 and Cys102 are joined by a disulfide.

This sequence belongs to the Cu-Zn superoxide dismutase family.

The protein resides in the host cytoplasm. Virion protein with no enzymatic activity. The chain is Cu-Zn superoxide dismutase-like protein from Bos taurus (Bovine).